The chain runs to 569 residues: Santalene synthase (569 aa).

Residues arginine 284, aspartate 321, aspartate 325, and arginine 460 each coordinate (2E)-geranyl diphosphate. Mg(2+)-binding residues include aspartate 321 and aspartate 325. The DDXXD motif motif lies at 321-325 (DDAYD). Asparagine 463, threonine 467, and glutamate 471 together coordinate Mg(2+).

Belongs to the terpene synthase family. Tpsb subfamily. Mg(2+) serves as cofactor. Mn(2+) is required as a cofactor.

It catalyses the reaction (2E,6E)-farnesyl diphosphate = (1S,5S,6R)-alpha-bergamotene + diphosphate. It carries out the reaction (2E,6E)-farnesyl diphosphate = (+)-alpha-santalene + diphosphate. The catalysed reaction is (2E,6E)-farnesyl diphosphate = (-)-beta-santalene + diphosphate. Functionally, catalyzes a mixture of sesquiterpenoids from (2E,6E)-farnesyl diphosphate in fragrance biosynthesis. Catalyzes the formation of alpha-santalene, beta-santalene, epi-beta-santalene and exo-alpha-bergamotene, as well as traces of alpha-farnesene and beta-farnesene. This is Santalene synthase from Santalum austrocaledonicum (Sandalwood).